We begin with the raw amino-acid sequence, 335 residues long: Large ribosomal subunit protein uL3 (335 aa).

3 disordered regions span residues 1–35 (MPQP…ADDG), 234–256 (IGNL…GQTG), and 312–335 (AVRP…SNQG). Positions 244-256 (RVRSTVPQQGQTG) are enriched in polar residues.

The protein belongs to the universal ribosomal protein uL3 family. As to quaternary structure, part of the 50S ribosomal subunit. Forms a cluster with proteins L14 and L24e.

Its function is as follows. One of the primary rRNA binding proteins, it binds directly near the 3'-end of the 23S rRNA, where it nucleates assembly of the 50S subunit. The polypeptide is Large ribosomal subunit protein uL3 (Halobacterium salinarum (strain ATCC 29341 / DSM 671 / R1)).